Consider the following 168-residue polypeptide: Peptide methionine sulfoxide reductase MsrA 2 (168 aa).

Residue C11 is part of the active site.

The protein belongs to the MsrA Met sulfoxide reductase family.

It catalyses the reaction L-methionyl-[protein] + [thioredoxin]-disulfide + H2O = L-methionyl-(S)-S-oxide-[protein] + [thioredoxin]-dithiol. The enzyme catalyses [thioredoxin]-disulfide + L-methionine + H2O = L-methionine (S)-S-oxide + [thioredoxin]-dithiol. In terms of biological role, has an important function as a repair enzyme for proteins that have been inactivated by oxidation. Catalyzes the reversible oxidation-reduction of methionine sulfoxide in proteins to methionine. The protein is Peptide methionine sulfoxide reductase MsrA 2 of Rhodopirellula baltica (strain DSM 10527 / NCIMB 13988 / SH1).